The sequence spans 889 residues: Exocyst complex component 1 (889 aa).

Phosphoserine occurs at positions 145 and 148. Positions 156-269 (RAVQKTQHMD…GHVKETMEKI (114 aa)) form a coiled coil. At Ser456 the chain carries Phosphoserine.

It belongs to the SEC3 family. In terms of assembly, the exocyst complex is composed of Sec3/Exoc1, Sec5/Exoc2, Sec6/Exoc3, Sec8/Exoc4, Sec10/Exoc5, Sec15/Exoc6, Exo70/Exoc7 and Exo84/Exoc8.

Its function is as follows. Component of the exocyst complex involved in the docking of exocytic vesicles with fusion sites on the plasma membrane. The chain is Exocyst complex component 1 from Drosophila melanogaster (Fruit fly).